The chain runs to 168 residues: CASP-like protein 4D1 (168 aa).

The Cytoplasmic portion of the chain corresponds to 1 to 11 (MAPPPPSLASR). A helical transmembrane segment spans residues 12–32 (MAALILRILTFIFLIASLVIL). Topologically, residues 33 to 57 (TTNTATLELDLVEVKVHFKDVYAYR) are extracellular. The chain crosses the membrane as a helical span at residues 58–78 (YMLATIVIGLAYTVLQIAFTL). Over 79–97 (YYVATGNRMMSGDGNLAFD) the chain is Cytoplasmic. The helical transmembrane segment at 98–118 (FFGDKVISYILVTGAAAGFAS) threads the bilayer. Residues 119 to 144 (TKDIKPVFSGSGDFDAFINKGYASAS) lie on the Extracellular side of the membrane. The chain crosses the membrane as a helical span at residues 145-165 (LLLIGFVCTAVLSVFSSYALP). Residues 166–168 (KQV) are Cytoplasmic-facing.

It belongs to the Casparian strip membrane proteins (CASP) family. Homodimer and heterodimers.

Its subcellular location is the cell membrane. This chain is CASP-like protein 4D1, found in Ricinus communis (Castor bean).